A 337-amino-acid polypeptide reads, in one-letter code: Monoacylglycerol lipase ABHD6 (337 aa).

Topologically, residues 1–19 (MDLDVVNMFVIAGGTLALP) are extracellular. The chain crosses the membrane as a helical; Signal-anchor for type II membrane protein span at residues 20–42 (ILAFVASFLLWPSALIRIYYWYW). Topologically, residues 43 to 337 (RRTLGMQVRY…HSTDNSKKLD (295 aa)) are cytoplasmic. The 242-residue stretch at 72–313 (PSILMLHGFS…CGHSVVMERP (242 aa)) folds into the AB hydrolase-1 domain. Serine 148 serves as the catalytic Nucleophile. Catalysis depends on charge relay system residues aspartate 278 and histidine 306.

This sequence belongs to the AB hydrolase superfamily.

It is found in the late endosome membrane. The protein resides in the lysosome membrane. Its subcellular location is the mitochondrion membrane. It catalyses the reaction Hydrolyzes glycerol monoesters of long-chain fatty acids.. It carries out the reaction 1-octanoylglycerol + H2O = octanoate + glycerol + H(+). The catalysed reaction is 1-decanoylglycerol + H2O = decanoate + glycerol + H(+). The enzyme catalyses 1-dodecanoylglycerol + H2O = dodecanoate + glycerol + H(+). It catalyses the reaction 1-tetradecanoylglycerol + H2O = tetradecanoate + glycerol + H(+). It carries out the reaction 2-hexadecanoylglycerol + H2O = glycerol + hexadecanoate + H(+). The catalysed reaction is 2-(9Z-octadecenoyl)-glycerol + H2O = glycerol + (9Z)-octadecenoate + H(+). The enzyme catalyses 1-(9Z-octadecenoyl)-glycerol + H2O = glycerol + (9Z)-octadecenoate + H(+). It catalyses the reaction 2-(9Z,12Z-octadecadienoyl)-glycerol + H2O = (9Z,12Z)-octadecadienoate + glycerol + H(+). It carries out the reaction 2-(5Z,8Z,11Z,14Z-eicosatetraenoyl)-glycerol + H2O = glycerol + (5Z,8Z,11Z,14Z)-eicosatetraenoate + H(+). The catalysed reaction is 1-(5Z,8Z,11Z,14Z-eicosatetraenoyl)-glycerol + H2O = glycerol + (5Z,8Z,11Z,14Z)-eicosatetraenoate + H(+). The enzyme catalyses 1-(9Z,12Z-octadecadienoyl)-glycerol + H2O = (9Z,12Z)-octadecadienoate + glycerol + H(+). It catalyses the reaction 3-(9Z-octadecenoyl)-sn-glycero-1-phospho-(3'-(9Z-octadecenoyl)-1'-sn-glycerol) + H2O = 3-(9Z-octadecenoyl)-sn-glycero-1-phospho-(1'-sn-glycerol) + (9Z)-octadecenoate + H(+). It carries out the reaction (S,S)-2-(9Z-octadecenoyl)-sn-glycero-1-phospho-(2'-(9Z-octadecenoyl)-1'-sn-glycerol) + H2O = (S,S)-2-(9Z-octadecenoyl)-sn-glycero-1-phospho-(1'-sn-glycerol) + (9Z)-octadecenoate + H(+). The catalysed reaction is (R,R)-2-(9Z-octadecenoyl)-sn-glycero-3-phospho-(2'-(9Z-octadecenoyl)-3'-sn-glycerol) + H2O = (R,R)-2-(9Z-octadecenoyl)-sn-glycero-3-phospho-(3'-sn-glycerol) + (9Z)-octadecenoate + H(+). Lipase that preferentially hydrolysis medium-chain saturated monoacylglycerols including 2-arachidonoylglycerol. Through 2-arachidonoylglycerol degradation may regulate endocannabinoid signaling pathways. Also has a lysophosphatidyl lipase activity with a preference for lysophosphatidylglycerol among other lysophospholipids. Also able to degrade bis(monoacylglycero)phosphate (BMP) and constitutes the major enzyme for BMP catabolism. BMP, also known as lysobisphosphatidic acid, is enriched in late endosomes and lysosomes and plays a key role in the formation of intraluminal vesicles and in lipid sorting. The protein is Monoacylglycerol lipase ABHD6 of Bos taurus (Bovine).